An 84-amino-acid chain; its full sequence is Cell division topological specificity factor (84 aa).

It belongs to the MinE family.

Prevents the cell division inhibition by proteins MinC and MinD at internal division sites while permitting inhibition at polar sites. This ensures cell division at the proper site by restricting the formation of a division septum at the midpoint of the long axis of the cell. The sequence is that of Cell division topological specificity factor from Pseudomonas fluorescens (strain ATCC BAA-477 / NRRL B-23932 / Pf-5).